The sequence spans 250 residues: Gamma-secretase subunit APH1-like (250 aa).

The next 7 membrane-spanning stretches (helical) occupy residues 5–25, 29–49, 57–77, 116–136, 157–177, 191–211, and 212–232; these read AGIG…VSVI, PFLI…LIIL, LPLK…SVCF, IALA…CLSL, FLIS…SMVI, IIVP…FASE, and GCVI…VHCG.

This sequence belongs to the APH-1 family. Probable component of the gamma-secretase complex, a complex composed of a presenilin homodimer, nicastrin, APH1 and PEN2.

The protein localises to the membrane. Functionally, probable subunit of the gamma-secretase complex, an endoprotease complex that catalyzes the intramembrane cleavage of integral proteins such as Notch receptors. The sequence is that of Gamma-secretase subunit APH1-like from Arabidopsis thaliana (Mouse-ear cress).